A 72-amino-acid chain; its full sequence is Large ribosomal subunit protein uL29 (72 aa).

The protein belongs to the universal ribosomal protein uL29 family.

In Thermodesulfovibrio yellowstonii (strain ATCC 51303 / DSM 11347 / YP87), this protein is Large ribosomal subunit protein uL29.